The sequence spans 559 residues: 2-isopropylmalate synthase (559 aa).

A Pyruvate carboxyltransferase domain is found at 33–307 (PIWCSSDLRD…DPQLDFSDID (275 aa)). 4 residues coordinate Mg(2+): Asp42, His246, His248, and Asn282. The regulatory domain stretch occupies residues 439 to 559 (ANTPYALVSH…SLSQQEAKAA (121 aa)).

This sequence belongs to the alpha-IPM synthase/homocitrate synthase family. LeuA type 2 subfamily. In terms of assembly, homodimer. Requires Mg(2+) as cofactor.

It localises to the cytoplasm. It catalyses the reaction 3-methyl-2-oxobutanoate + acetyl-CoA + H2O = (2S)-2-isopropylmalate + CoA + H(+). It participates in amino-acid biosynthesis; L-leucine biosynthesis; L-leucine from 3-methyl-2-oxobutanoate: step 1/4. Functionally, catalyzes the condensation of the acetyl group of acetyl-CoA with 3-methyl-2-oxobutanoate (2-ketoisovalerate) to form 3-carboxy-3-hydroxy-4-methylpentanoate (2-isopropylmalate). This chain is 2-isopropylmalate synthase, found in Pseudomonas fluorescens (strain SBW25).